Consider the following 129-residue polypeptide: UPF0325 protein PC1_0937 (129 aa).

It belongs to the UPF0325 family.

This is UPF0325 protein PC1_0937 from Pectobacterium carotovorum subsp. carotovorum (strain PC1).